A 391-amino-acid polypeptide reads, in one-letter code: Saxitoxin and tetrodotoxin-binding protein 2 (391 aa).

Positions 1–20 (MGAVPGVVLLLMLAVLGIRA) are cleaved as a signal peptide. 2 tandem repeats follow at residues 24 to 202 (PEEC…HKKS) and 203 to 391 (PEEC…PEQD). N-linked (GlcNAc...) asparagine glycans are attached at residues Asn41, Asn54, Asn63, Asn97, Asn234, Asn268, Asn277, and Asn307.

As to quaternary structure, homodimer or heterodimer of PSTBP1 and PSTBP2. Glycosylated.

It localises to the secreted. Its function is as follows. Binds both saxitoxin and tetradotoxin. May play a role in toxin accumulation and/or excretion. This chain is Saxitoxin and tetrodotoxin-binding protein 2 (psbp2), found in Takifugu pardalis (Panther puffer).